The chain runs to 616 residues: Chaperone protein HscA (616 aa).

It belongs to the heat shock protein 70 family.

Functionally, chaperone involved in the maturation of iron-sulfur cluster-containing proteins. Has a low intrinsic ATPase activity which is markedly stimulated by HscB. Involved in the maturation of IscU. This is Chaperone protein HscA from Proteus mirabilis (strain HI4320).